Reading from the N-terminus, the 82-residue chain is RNA-binding protein Hfq (82 aa).

Positions 9 to 68 constitute a Sm domain; the sequence is DPYLNTLRKERVPVSIYLVNGIKLQGQIESFDQFVILLKNTVSQMVYKHAISTVVPSRPV.

This sequence belongs to the Hfq family. As to quaternary structure, homohexamer.

In terms of biological role, RNA chaperone that binds small regulatory RNA (sRNAs) and mRNAs to facilitate mRNA translational regulation in response to envelope stress, environmental stress and changes in metabolite concentrations. Also binds with high specificity to tRNAs. This chain is RNA-binding protein Hfq, found in Pseudomonas aeruginosa (strain LESB58).